Here is a 215-residue protein sequence, read N- to C-terminus: Octanoyltransferase (215 aa).

The region spanning 35-210 is the BPL/LPL catalytic domain; the sequence is PDTPDQLWVV…HCLEAIVEYG (176 aa). Substrate contacts are provided by residues 74-81, 141-143, and 154-156; these read RGGQVTYH, SVG, and GLA. The active-site Acyl-thioester intermediate is cysteine 172.

This sequence belongs to the LipB family.

Its subcellular location is the cytoplasm. The enzyme catalyses octanoyl-[ACP] + L-lysyl-[protein] = N(6)-octanoyl-L-lysyl-[protein] + holo-[ACP] + H(+). It functions in the pathway protein modification; protein lipoylation via endogenous pathway; protein N(6)-(lipoyl)lysine from octanoyl-[acyl-carrier-protein]: step 1/2. Functionally, catalyzes the transfer of endogenously produced octanoic acid from octanoyl-acyl-carrier-protein onto the lipoyl domains of lipoate-dependent enzymes. Lipoyl-ACP can also act as a substrate although octanoyl-ACP is likely to be the physiological substrate. This is Octanoyltransferase from Alkalilimnicola ehrlichii (strain ATCC BAA-1101 / DSM 17681 / MLHE-1).